Reading from the N-terminus, the 140-residue chain is UPF0102 protein alr1796 (140 aa).

This sequence belongs to the UPF0102 family.

This chain is UPF0102 protein alr1796, found in Nostoc sp. (strain PCC 7120 / SAG 25.82 / UTEX 2576).